The chain runs to 997 residues: Protein HIR2 (997 aa).

5 WD repeats span residues 10 to 48 (GISG…DTAF), 117 to 152 (VSQS…TRSA), 153 to 194 (NKKE…VVYH), 274 to 319 (VHSP…PLFA), and 323 to 362 (ISDS…LGKT). The segment at 408–584 (ADNSSNILST…RKPKEDALGN (177 aa)) is disordered. The span at 409-446 (DNSSNILSTDTNTNEKNLSTVNTTEPQTNSQSSSYNNK) shows a compositional bias: polar residues. The span at 464 to 480 (SDEKAKNLEARPIEAKS) shows a compositional bias: basic and acidic residues. Residues 491 to 501 (SKSSSVTTSDN) show a composition bias toward polar residues. The span at 518–538 (TEKKTKPDKKSIKSENGESKV) shows a compositional bias: basic and acidic residues. The span at 539-567 (NKAQNTISPKESNTTDNKSTTPDFKNPSY) shows a compositional bias: polar residues. 2 WD repeats span residues 665-706 (LFQD…IIPP) and 708-745 (TIGV…LEFP).

It belongs to the WD repeat HIR1 family.

It localises to the nucleus. Required for replication-independent chromatin assembly and for the periodic repression of histone gene transcription during the cell cycle. In Candida glabrata (strain ATCC 2001 / BCRC 20586 / JCM 3761 / NBRC 0622 / NRRL Y-65 / CBS 138) (Yeast), this protein is Protein HIR2 (HIR2).